Consider the following 104-residue polypeptide: Toxin-like protein 14 (104 aa).

The signal sequence occupies residues Met-1–Cys-25.

In terms of processing, contains 4 disulfide bonds. As to expression, expressed by the venom gland.

It localises to the secreted. The chain is Toxin-like protein 14 from Urodacus yaschenkoi (Inland robust scorpion).